A 156-amino-acid chain; its full sequence is MPRRGPVAKRDVLPDPIYNSKLVTRLINKIMIDGKKSKAQKILYTAFDIIRERTGKDPMEVFEQALKNVMPVLEVRARRVGGANYQVPVEVRPDRRVSLGLRWLVQYARLRNEKTMEERLANEIMDAANNTGAAVKKREDTHKMAEANKAFAHYRW.

This sequence belongs to the universal ribosomal protein uS7 family. Part of the 30S ribosomal subunit. Contacts proteins S9 and S11.

Functionally, one of the primary rRNA binding proteins, it binds directly to 16S rRNA where it nucleates assembly of the head domain of the 30S subunit. Is located at the subunit interface close to the decoding center, probably blocks exit of the E-site tRNA. In Geobacillus stearothermophilus (Bacillus stearothermophilus), this protein is Small ribosomal subunit protein uS7 (rpsG).